The sequence spans 518 residues: Zinc finger protein 449 (518 aa).

The SCAN box domain occupies 30–112 (RQRFRQFQYR…SLIEDLQREL (83 aa)). Over residues 292 to 304 (NPTLGETPENSNL) the composition is skewed to polar residues. Residues 292-325 (NPTLGETPENSNLEEPLNPKPHKKKSPGEKPHRC) form a disordered region. C2H2-type zinc fingers lie at residues 323-345 (HRCP…QRIH), 351-373 (HKCP…QRLH), 379-401 (YECT…QRTH), 407-429 (YKCL…LKTH), 435-457 (HRCH…QRTH), 463-485 (FKCN…LRIH), and 491-513 (YKCT…QVTH).

It belongs to the krueppel C2H2-type zinc-finger protein family.

The protein resides in the nucleus. Its function is as follows. May be involved in transcriptional regulation. This chain is Zinc finger protein 449 (ZNF449), found in Homo sapiens (Human).